A 570-amino-acid chain; its full sequence is MFS-type transporter ptmT (570 aa).

Residues 1–11 (MPDSGNIQLDT) are compositionally biased toward polar residues. A disordered region spans residues 1–34 (MPDSGNIQLDTLQHKDHSQETTSHYEGGSQLPEQ). 14 helical membrane-spanning segments follow: residues 50–70 (GLIRVILITMGVALCSFCVGL), 94–114 (WYVSAYLLVTSAFILSFGKIY), 121–141 (WTYLISLGLFELGSLICAITP), 151–171 (AISGLGSAGLFPGSVIILSNI), 182–202 (AFIGIMSGIATVTGPILGGVF), 210–230 (WCFYINLPIGGVTAVVVFLFM), 247–267 (GLDWIGTAVFIPAIVSLLLAL), 278–298 (NVRIIMLFIIAGVLGMVWLLI), 323–343 (IYTIPFVGCVIVLGYYLPIWF), 356–376 (IMNLPTVVGTIVVGLLSSVLI), 379–399 (VGYMMPFLVLGSVMLAVGAGL), 413–433 (IGYQAMIGMGAGLGYQLPLLV), 445–465 (VATAVVIFMQNLAGSIFSAIA), and 517–537 (VTHTFYAGVAAASLSVFGAFI). Asn-541 is a glycosylation site (N-linked (GlcNAc...) asparagine). The segment at 550–570 (PEPLVPGGSHSGAERDSKNGT) is disordered. The segment covering 561 to 570 (GAERDSKNGT) has biased composition (basic and acidic residues).

It belongs to the major facilitator superfamily. TCR/Tet family.

Its subcellular location is the cell membrane. MFS-type transporter; part of the gene cluster that mediates the biosynthesis of the indole diterpenes penitrems. May be involved in the efflux of penitrems. The polypeptide is MFS-type transporter ptmT (Penicillium ochrochloron).